Reading from the N-terminus, the 213-residue chain is DNA-directed RNA polymerase subunit alpha (213 aa).

This sequence belongs to the RNA polymerase alpha chain family. As to quaternary structure, in plastids the minimal PEP RNA polymerase catalytic core is composed of four subunits: alpha, beta, beta', and beta''. When a (nuclear-encoded) sigma factor is associated with the core the holoenzyme is formed, which can initiate transcription.

It localises to the plastid. The protein resides in the chloroplast. It catalyses the reaction RNA(n) + a ribonucleoside 5'-triphosphate = RNA(n+1) + diphosphate. Its function is as follows. DNA-dependent RNA polymerase catalyzes the transcription of DNA into RNA using the four ribonucleoside triphosphates as substrates. In Euglena stellata, this protein is DNA-directed RNA polymerase subunit alpha (rpoA).